The chain runs to 443 residues: GTPase Der (443 aa).

EngA-type G domains are found at residues 3-168 and 178-353; these read PLLA…PEAP and VHLA…RNRS. GTP is bound by residues 9-16, 56-60, 120-123, 184-191, 231-235, and 296-299; these read GRPNVGKS, DTGGY, NKVE, DTAGL, and NKWD. Residues 354 to 438 form the KH-like domain; the sequence is QNVSTSQLNK…PISLRFLHKN (85 aa).

This sequence belongs to the TRAFAC class TrmE-Era-EngA-EngB-Septin-like GTPase superfamily. EngA (Der) GTPase family. In terms of assembly, associates with the 50S ribosomal subunit.

Functionally, GTPase that plays an essential role in the late steps of ribosome biogenesis. This Chlorobium chlorochromatii (strain CaD3) protein is GTPase Der.